The sequence spans 746 residues: Root phototropism protein 3 (746 aa).

A disordered region spans residues 1–24 (MMWESESDGGVGVGGGGGREYGDG). Residues 9–19 (GGVGVGGGGGR) show a composition bias toward gly residues. The BTB domain maps to 54-122 (SDLLVKIGDM…CYGVPVDLTA (69 aa)). In terms of domain architecture, NPH3 spans 250–605 (DWWFEDVSIL…VQVLFSEQVK (356 aa)). Residues 461–500 (EQTEGSSPSRMSPSPSQSMYADIPRGNNNNGGGGGGNNQN) are disordered. Residues 466–478 (SSPSRMSPSPSQS) show a composition bias toward low complexity. Tyrosine 546 bears the Phosphotyrosine mark. Positions 708 to 746 (SKLTKMSGQESHDISSGGEQAGVDHPPPRKPRRWRNSIS) are disordered. The span at 735 to 746 (PRKPRRWRNSIS) shows a compositional bias: basic residues.

Belongs to the NPH3 family. As to quaternary structure, interacts with PKS1, PKS2, RPT2, PHOT1 and PHOT2. Subunit of a complex made of CAR6, PHOT1 and RPT3/NPH3. Phosphorylated in the dark. In terms of tissue distribution, expressed in hypocotyls, guard cells and mesophyll cells.

The protein resides in the cell membrane. Its pathway is protein modification; protein ubiquitination. Functionally, may act as a substrate-specific adapter of an E3 ubiquitin-protein ligase complex (CUL3-RBX1-BTB) which mediates the ubiquitination and subsequent proteasomal degradation of target proteins. Signal transducer of the phototropic response and photo-induced movements. Involved in the phot1 pathway under low blue light (LBL) fluence rate and in the phot2 pathway under higher fluence rate of blue light (HBL). Necessary for root and hypocotyl phototropisms, but not for the regulation of stomata opening. Not involved in chloroplast accumulation and translocation. The sequence is that of Root phototropism protein 3 (RPT3) from Arabidopsis thaliana (Mouse-ear cress).